Reading from the N-terminus, the 372-residue chain is Protein RecA (372 aa).

Gly66–Thr73 lines the ATP pocket. The interval Gly328–Thr359 is disordered. Residues Ala345–Thr359 show a composition bias toward low complexity.

Belongs to the RecA family.

Its subcellular location is the cytoplasm. Can catalyze the hydrolysis of ATP in the presence of single-stranded DNA, the ATP-dependent uptake of single-stranded DNA by duplex DNA, and the ATP-dependent hybridization of homologous single-stranded DNAs. It interacts with LexA causing its activation and leading to its autocatalytic cleavage. This Streptomyces ambofaciens protein is Protein RecA.